A 529-amino-acid chain; its full sequence is Endoglucanase 21 (529 aa).

A signal peptide spans 1–24 (MVAAMTMCAAVAVLLVLTSTMAAA). Asp-89 acts as the Nucleophile in catalysis. Asn-342 carries N-linked (GlcNAc...) asparagine glycosylation. Residues His-429, Asp-481, and Glu-490 contribute to the active site.

It belongs to the glycosyl hydrolase 9 (cellulase E) family. Expressed in roots and flowers.

Its subcellular location is the secreted. The enzyme catalyses Endohydrolysis of (1-&gt;4)-beta-D-glucosidic linkages in cellulose, lichenin and cereal beta-D-glucans.. The protein is Endoglucanase 21 (GLU9) of Oryza sativa subsp. japonica (Rice).